We begin with the raw amino-acid sequence, 103 residues long: Small ribosomal subunit protein uS10 (103 aa).

Belongs to the universal ribosomal protein uS10 family. Part of the 30S ribosomal subunit.

Functionally, involved in the binding of tRNA to the ribosomes. The chain is Small ribosomal subunit protein uS10 from Chromobacterium violaceum (strain ATCC 12472 / DSM 30191 / JCM 1249 / CCUG 213 / NBRC 12614 / NCIMB 9131 / NCTC 9757 / MK).